Here is a 360-residue protein sequence, read N- to C-terminus: Dehydrogenase mokE (360 aa).

50–53 is a binding site for NADP(+); that stretch reads SDTK. Residue 134 to 141 coordinates substrate; sequence AGISTAGL. NADP(+)-binding positions include 173 to 176, 196 to 199, tyrosine 214, 261 to 262, and threonine 279; these read STAT, SPHN, and LN. 281–285 is a substrate binding site; that stretch reads GPTIF. 350 to 351 contacts NADP(+); it reads LS.

It belongs to the zinc-containing alcohol dehydrogenase family. Monomer.

Its pathway is polyketide biosynthesis; lovastatin biosynthesis. Functionally, dehydrogenase; part of the gene cluster that mediates the biosynthesis of monakolin K, also known as lovastatin, and which acts as a potent competitive inhibitor of HMG-CoA reductase. Monakolin K biosynthesis is performed in two stages. The first stage is catalyzed by the nonaketide synthase mokA, which belongs to type I polyketide synthases and catalyzes the iterative nine-step formation of the polyketide. This PKS stage is completed by the action of dehydrogenase mokE, which catalyzes the NADPH-dependent reduction of the unsaturated tetra-, penta- and heptaketide intermediates that arise during the mokA-mediated biosynthesis of the nonaketide chain and leads to dihydromonacolin L. Covalently bound dihydromonacolin L is released from mokA by the mokD esterase. Conversion of dihydromonacolin L into monacolin L and then monacolin J is subsequently performed with the participation of molecular oxygen and P450 monoogygenase mokC. Finally, mokF performs the conversion of monacoline J to monacoline K through the addition of the side-chain diketide moiety (2R)-2-methylbutanoate produced by the diketide synthase mokB. The protein is Dehydrogenase mokE of Monascus pilosus (Red mold).